Reading from the N-terminus, the 64-residue chain is Large ribosomal subunit protein bL35 (64 aa).

The protein belongs to the bacterial ribosomal protein bL35 family.

This is Large ribosomal subunit protein bL35 from Ectopseudomonas mendocina (strain ymp) (Pseudomonas mendocina).